We begin with the raw amino-acid sequence, 621 residues long: MLLLPSPADGRGTAITHALTSASTLCRVEPVGRWFEAFVKRRNRNASASFQELEDKKELSEESEDEELQLEEFAMLKTLDPKDWKNQDHYAVLGLGHVRYKATQRQIKAAHKAMVLKHHPDKRKAAGEPIKEGDNDYFTCITKAYEMLSDPVKRRAFNSVDPTFDNSVPSKSEAKDNFFEVFSPVFERNSRWSNKKNVPKLGDMNSSFEDVDIFYSFWYNFDSWREFSYLDEEEKEKAECRDERRWIEKQNRATRAQRKKEEMNRIRTLVDNAYSCDPRIKKFKEEEKAKKEAEKKAKAEAKRKEQEAKEKQRQAELEAARLAKEKEEEEVRQQALLAKKEKDLQKKAIKKERQKLRNSCKTWNHFSDNEAERVKMMEEVEKLCDRLELASLQCLNETLTSCTKEVGKAALEKQIEEINEQIRKEKEEAEAHMRQASKNTEKSAGGGGNGSKNWSEDDLQLLIKAVNLFPAGTNSRWEVIANYMNIHSSSGVKRTAKDVIGKAKSLQKLDPHQKDDINKKAFDKFKKEHGVVPQADNAAPSERFEGPYTDFTPWTTEEQKLLEQALKTYPVNTPERWEKIAEAVPGRTKKDCMKRYKELVEMVKAKKAAQEQVLNASRAKK.

M1 bears the N-acetylmethionine mark. 4 positions are modified to phosphoserine: S47, S49, S60, and S63. The J domain occupies 88–161 (DHYAVLGLGH…VKRRAFNSVD (74 aa)). A ZRF1-UBD region spans residues 160–250 (VDPTFDNSVP…RDERRWIEKQ (91 aa)). Residue S183 is modified to Phosphoserine. Disordered regions lie at residues 294–315 (EKKAKAEAKRKEQEAKEKQRQA) and 427–453 (EEAEAHMRQASKNTEKSAGGGGNGSKN). SANT domains lie at 449 to 511 (NGSK…KLDP) and 549 to 604 (TDFT…EMVK).

In terms of assembly, component of ribosome-associated complex (RAC), a heterodimer composed of Hsp70/DnaK-type chaperone HSPA14 and Hsp40/DnaJ-type chaperone DNAJC2. Interacts (via ZRF1-UBD region) with ID1. In terms of processing, phosphorylated in M (mitotic) phase.

It localises to the nucleus. The protein resides in the cytoplasm. The protein localises to the cytosol. In terms of biological role, acts both as a chaperone in the cytosol and as a chromatin regulator in the nucleus. When cytosolic, acts as a molecular chaperone: component of the ribosome-associated complex (RAC), a complex involved in folding or maintaining nascent polypeptides in a folding-competent state. In the RAC complex, stimulates the ATPase activity of the ribosome-associated pool of Hsp70-type chaperones HSPA14 that bind to the nascent polypeptide chain. When nuclear, mediates the switching from polycomb-repressed genes to an active state: specifically recruited at histone H2A ubiquitinated at 'Lys-119' (H2AK119ub), and promotes the displacement of the polycomb PRC1 complex from chromatin, thereby facilitating transcription activation. In Macaca fascicularis (Crab-eating macaque), this protein is DnaJ homolog subfamily C member 2 (DNAJC2).